Reading from the N-terminus, the 119-residue chain is Large ribosomal subunit protein bL20 (119 aa).

The protein belongs to the bacterial ribosomal protein bL20 family.

Binds directly to 23S ribosomal RNA and is necessary for the in vitro assembly process of the 50S ribosomal subunit. It is not involved in the protein synthesizing functions of that subunit. The chain is Large ribosomal subunit protein bL20 from Rhodopseudomonas palustris (strain HaA2).